Consider the following 1225-residue polypeptide: MFSYSQAIRFIIFLLPICLTFKITENRIDRGKLNFEIQDITIKSGAFWSIVDNSICTFFGSLMVEPQASLYVSSTSPILALQVAFVSILGVFHNQGNITFDSSASLTSATYRIITSTFRNTGRMFFSASGKFPNTMDIVASDWTNNGLLSFHQDQRTSGVVSLGSALGTITNNGQIKLSNQVYQQRTQISGSGCFVAINNSTIYISNSLLPVQITQSFYLADSTSSIIVDSFSATQTFNVYGFGNGNMIGLTLPLVGNYWYSSYTYDATTGILIMRNVFLEQKFNIGLGYNPSLFKIVTDWGAGIPSTILGSLSYSGCVPSRRLPSICQIDPISSLEIPGTKPTQFTSVFVSTDDSGRNGQYVGLFEVATNKNYEWVSAVIIITSIPTVTIELPPTLTLEAQWLPTVSGVLHTSSTITQSTKIGLLTTVSLVPVAETQLASRTFSIVGPPIPDTTSLELVVPTKSETRVVTESTVVPVLPPKVTHFTNSSTSNRRYSSESMVDEEFPSEPFMSDEVSIEVYESYTDESCVISTDFSVDVDYSSDLSMNFQTYDTLDTTEMFNTVENFETYDTFGTIESFDIFETSQTFESYETFNETSDLSMFSLTSESFSDLPPPLVQTDTPVSFNPVPSRTNMSEKTIMWEVTNSQGSIITESGIILISGEYQTTVTTFLRDLDQMEGYTKYTKTWEVTNSNGSVVTESGIIDESGSYHTTVTTFPQKDQNWEWAANTVEYTKTWIVTNEDGSIITESGIVGESGLYQTTVTTFPHELSSFTIYQSEEAHSPGVINAGDIESTPLATSSSIYQSVIIEDEFPSSPGNTYTDVFSPTTGHDLDLPDDTTFTPSQSSSTTVPIESEYISESIILDAGSSVSTMISPTTLTTNFPIFDSSDNQFKHVSLWDSRVSSRSIVIVSSEFPESDAPLILASPNDGSSNQTSTTASITVNDNQNINNPEFQQGEAVISSSIDSSVSHLYYISEETSIASNNGDLSDDLEVDFILLTSLHDTISAKATSAGYSWKFYPESDEIQIDQTGDYNYSLAGAKTHIHESAYTQQDASTQKGASVQQETSIQQRVSTKQETYTQEGTQQVTRTQEKVQQGASHSTTNSHFEGTFISKTASPTNNDFTLSFEPKDNATDISNSFFAHLSIVGNSTVFETDYTDFSFIANSNTFKSDANGVDSTSNQTYSAGVGGSNVSGLISKSESVVLLIRPVMIFVFLAICVVIML.

An N-terminal signal peptide occupies residues 1-20 (MFSYSQAIRFIIFLLPICLT). 6 N-linked (GlcNAc...) asparagine glycosylation sites follow: Asn97, Asn200, Asn488, Asn595, Asn634, and Asn694. The segment at 832-852 (DLDLPDDTTFTPSQSSSTTVP) is disordered. Over residues 838–852 (DTTFTPSQSSSTTVP) the composition is skewed to low complexity. 2 N-linked (GlcNAc...) asparagine glycosylation sites follow: Asn933 and Asn1035. Residues 1049–1114 (AYTQQDASTQ…NSHFEGTFIS (66 aa)) are disordered. N-linked (GlcNAc...) asparagine glycosylation is found at Asn1133, Asn1150, Asn1182, and Asn1193. The GPI-anchor amidated serine moiety is linked to residue Ser1195. Residues 1196 to 1225 (GLISKSESVVLLIRPVMIFVFLAICVVIML) constitute a propeptide, removed in mature form.

This sequence belongs to the HYR1/IFF family. Post-translationally, the GPI-anchor is attached to the protein in the endoplasmic reticulum and serves to target the protein to the cell surface. There, the glucosamine-inositol phospholipid moiety is cleaved off and the GPI-modified mannoprotein is covalently attached via its lipidless GPI glycan remnant to the 1,6-beta-glucan of the outer cell wall layer.

It localises to the secreted. The protein resides in the cell wall. It is found in the membrane. Functionally, GPI-anchored cell wall protein involved in cell wall organization, hyphal growth, as well as in host-fungal interaction and virulence. The protein is Hyphally regulated cell wall protein 4 (HYR4) of Candida albicans (strain SC5314 / ATCC MYA-2876) (Yeast).